Here is a 630-residue protein sequence, read N- to C-terminus: Terpinolene synthase, chloroplastic (630 aa).

A chloroplast-targeting transit peptide spans 1–52 (MALVSILPLSSKSVLHKSWIVSTYEHKAISRTIPNLGLRGRGKSVTHSLRMS). Residues Asp-381, Asp-385, Asn-525, and Asp-533 each coordinate Mg(2+). The short motif at 381–385 (DDIYD) is the DDXXD motif element.

It belongs to the terpene synthase family. Tpsd subfamily. Mg(2+) is required as a cofactor. It depends on Mn(2+) as a cofactor. The cofactor is K(+).

It localises to the plastid. The protein resides in the chloroplast. It catalyses the reaction (2E)-geranyl diphosphate = terpinolene + diphosphate. It functions in the pathway terpene metabolism; oleoresin biosynthesis. Involved in defensive oleoresin formation in conifers in response to insect attack or other injury. Involved in monoterpene (C10) olefins biosynthesis. In Abies grandis (Grand fir), this protein is Terpinolene synthase, chloroplastic (ag9).